A 35-amino-acid polypeptide reads, in one-letter code: Cytochrome b6-f complex subunit 5 (35 aa).

The chain crosses the membrane as a helical span at residues 5 to 25 (LLTGIVLGSIFITLLGLLAAA).

The protein belongs to the PetG family. As to quaternary structure, the 4 large subunits of the cytochrome b6-f complex are cytochrome b6, subunit IV (17 kDa polypeptide, PetD), cytochrome f and the Rieske protein, while the 4 small subunits are PetG, PetL, PetM and PetN. The complex functions as a dimer.

It is found in the plastid. The protein localises to the chloroplast thylakoid membrane. Component of the cytochrome b6-f complex, which mediates electron transfer between photosystem II (PSII) and photosystem I (PSI), cyclic electron flow around PSI, and state transitions. PetG is required for either the stability or assembly of the cytochrome b6-f complex. This Cyanidium caldarium (Red alga) protein is Cytochrome b6-f complex subunit 5.